Consider the following 379-residue polypeptide: Putative zinc metalloprotease BMEI0829 (379 aa).

Zn(2+) is bound at residue H33. E34 is a catalytic residue. A Zn(2+)-binding site is contributed by H37. 4 consecutive transmembrane segments (helical) span residues 39–61 (LVAR…ELLG), 122–144 (VFAG…FALY), 305–327 (FDWL…LFPL), and 355–377 (IFYR…NDLF). Residues 133-208 (TIAIFSVFFA…LNFTVERDGK (76 aa)) form the PDZ domain.

It belongs to the peptidase M50B family. It depends on Zn(2+) as a cofactor.

It localises to the cell inner membrane. This Brucella melitensis biotype 1 (strain ATCC 23456 / CCUG 17765 / NCTC 10094 / 16M) protein is Putative zinc metalloprotease BMEI0829.